The following is a 439-amino-acid chain: Polygalacturonase QRT2 (439 aa).

The N-terminal stretch at 1–21 (MYEKIIILSVFLLTFLPSCFS) is a signal peptide. A disordered region spans residues 43–69 (RQHQHGHNTRNSHLKNRHGYAPRSSPR). Residues 44–62 (QHQHGHNTRNSHLKNRHGY) show a composition bias toward basic residues. PbH1 repeat units follow at residues 201–250 (CNNL…HVSG) and 251–272 (TQNI…SIVS). Asp265 (proton donor) is an active-site residue. His288 is a catalytic residue. PbH1 repeat units lie at residues 304–325 (VSNV…RIKT) and 333–354 (AKNI…IINQ).

The protein belongs to the glycosyl hydrolase 28 family. As to expression, expressed predominantly in roots with lower expression levels in rosette leaves, flower buds and siliques. Bearly detected in seeds. Found in flowers undergoing floral organ abscission. Also expressed early in anther development, at the time of microspore separation.

It localises to the secreted. It is found in the cell wall. The catalysed reaction is (1,4-alpha-D-galacturonosyl)n+m + H2O = (1,4-alpha-D-galacturonosyl)n + (1,4-alpha-D-galacturonosyl)m.. Functionally, polygalacturonase required for cell type-specific pectin degradation to separate microspores. Involved in anther dehiscence and floral organ abscission. The sequence is that of Polygalacturonase QRT2 (QRT2) from Arabidopsis thaliana (Mouse-ear cress).